The primary structure comprises 335 residues: Mycobacterial beta-ketoacyl-[acyl-carrier-protein] synthase III (335 aa).

Catalysis depends on residues C122 and H258. An ACP-binding region spans residues 259 to 263; it reads QANSR. Residue N289 is part of the active site.

It belongs to the thiolase-like superfamily. FabH family. In terms of assembly, homodimer.

The protein resides in the cytoplasm. The catalysed reaction is malonyl-[ACP] + dodecanoyl-CoA + H(+) = 3-oxotetradecanoyl-[ACP] + CO2 + CoA. The protein operates within lipid metabolism; fatty acid biosynthesis. Its pathway is lipid metabolism; mycolic acid biosynthesis. In terms of biological role, catalyzes the condensation reaction of fatty acid synthesis by the addition to an acyl acceptor of two carbons from malonyl-ACP. Catalyzes the first condensation reaction which initiates fatty acid synthesis and may therefore play a role in governing the total rate of fatty acid production. Possesses both acetoacetyl-ACP synthase and acetyl transacylase activities. Its substrate specificity determines the biosynthesis of branched-chain and/or straight-chain of fatty acids. This chain is Mycobacterial beta-ketoacyl-[acyl-carrier-protein] synthase III, found in Mycobacterium avium (strain 104).